The chain runs to 3027 residues: DmX-like protein 1 (3027 aa).

3 WD repeats span residues 108–145 (FLES…KPTE), 166–206 (KTAS…RTAV), and 229–277 (AHPR…NDCL). Residues S324, S422, S425, and S436 each carry the phosphoserine modification. Polar residues predominate over residues 420 to 433 (PSSEASVEDSNQAD). The segment at 420 to 450 (PSSEASVEDSNQADVKSDEETDDGVDDLKIN) is disordered. The stretch at 476 to 516 (DHQIEVLLSEWSKNADMLFSIHPMDGSLLVWHVDWLDEYQP) is one WD 4 repeat. A disordered region spans residues 563–584 (KQKPSGLTRSTSMLISSGHNKS). S574 bears the Phosphoserine mark. WD repeat units follow at residues 580-621 (GHNK…ESAF), 628-665 (SHKS…RTPD), and 848-895 (GKDS…IPVS). S918 and S924 each carry phosphoserine. 3 WD repeats span residues 968 to 1010 (PSAG…GESA), 1134 to 1175 (SNTK…VQDQ), and 1211 to 1251 (GSPP…EPVI). Phosphoserine occurs at positions 1830, 1896, 1908, and 1970. Disordered regions lie at residues 2367–2412 (PSKE…SSAP) and 2446–2468 (SRAE…DDDD). Over residues 2451 to 2468 (DSEESLGSDDDDNDDDDD) the composition is skewed to acidic residues. WD repeat units lie at residues 2742 to 2783 (KAIN…TCFR), 2785 to 2824 (GGNS…CPVT), 2836 to 2878 (CHNK…ANSL), 2884 to 2923 (CHDS…QRQL), 2926 to 2965 (SHDS…LLHT), and 2978 to 3016 (NIGT…SPLN).

Expressed in bone, breast, eye, foreskin, heart, parathyroid, small intestine, testis, tonsils, placenta and uterus.

The polypeptide is DmX-like protein 1 (DMXL1) (Homo sapiens (Human)).